The chain runs to 228 residues: C-type lectin domain-containing protein 88 (228 aa).

An N-terminal signal peptide occupies residues 1–18; that stretch reads MQFIFFGTLFSGLLLVCA. Ser27 carries an O-linked (Xyl...) (chondroitin sulfate) serine glycan. The region spanning 88 to 218 is the C-type lectin domain; it reads YSDSCYWVET…CTYLFYSICE (131 aa). 2 disulfides stabilise this stretch: Cys109–Cys217 and Cys188–Cys209. Asn220 carries N-linked (GlcNAc...) asparagine glycosylation.

This chain is C-type lectin domain-containing protein 88, found in Caenorhabditis elegans.